Reading from the N-terminus, the 124-residue chain is Glutaredoxin-2 (124 aa).

An intrachain disulfide couples Cys13 to Cys16.

The protein belongs to the glutaredoxin family. As to quaternary structure, homodimer.

The protein resides in the host cytoplasm. In terms of biological role, glutaredoxin necessary for virion morphogenesis and virus replication. Functions as a thiol-disulfide transfer protein between membrane-associated OPG128 and substrates OPG095 or OPG053. The complete pathway for formation of disulfide bonds in intracellular virion membrane proteins sequentially involves oxidation of OPG072, OPG128 and OPG088. Exhibit thioltransferase and dehydroascorbate reductase activities in vitro. The polypeptide is Glutaredoxin-2 (OPG088) (Camelus).